A 248-amino-acid chain; its full sequence is UDP-2,3-diacylglucosamine hydrolase (248 aa).

Mn(2+) is bound by residues Asp8, His10, Asp41, Asn79, and His114. Position 79–80 (79–80) interacts with substrate; sequence NR. Positions 122, 160, 171, 174, and 202 each coordinate substrate. The Mn(2+) site is built by His202 and His204.

This sequence belongs to the LpxH family. Mn(2+) serves as cofactor.

Its subcellular location is the cell inner membrane. It catalyses the reaction UDP-2-N,3-O-bis[(3R)-3-hydroxytetradecanoyl]-alpha-D-glucosamine + H2O = 2-N,3-O-bis[(3R)-3-hydroxytetradecanoyl]-alpha-D-glucosaminyl 1-phosphate + UMP + 2 H(+). It functions in the pathway glycolipid biosynthesis; lipid IV(A) biosynthesis; lipid IV(A) from (3R)-3-hydroxytetradecanoyl-[acyl-carrier-protein] and UDP-N-acetyl-alpha-D-glucosamine: step 4/6. Hydrolyzes the pyrophosphate bond of UDP-2,3-diacylglucosamine to yield 2,3-diacylglucosamine 1-phosphate (lipid X) and UMP by catalyzing the attack of water at the alpha-P atom. Involved in the biosynthesis of lipid A, a phosphorylated glycolipid that anchors the lipopolysaccharide to the outer membrane of the cell. This chain is UDP-2,3-diacylglucosamine hydrolase, found in Stenotrophomonas maltophilia (strain K279a).